The sequence spans 83 residues: uncharacterized protein (83 aa).

It localises to the plastid. The protein resides in the chloroplast. This is an uncharacterized protein from Pinus thunbergii (Japanese black pine).